A 407-amino-acid chain; its full sequence is Phosphopentomutase (407 aa).

Positions 10, 306, 311, 347, 348, and 359 each coordinate Mn(2+).

Belongs to the phosphopentomutase family. Mn(2+) is required as a cofactor.

The protein resides in the cytoplasm. The catalysed reaction is 2-deoxy-alpha-D-ribose 1-phosphate = 2-deoxy-D-ribose 5-phosphate. It catalyses the reaction alpha-D-ribose 1-phosphate = D-ribose 5-phosphate. Its pathway is carbohydrate degradation; 2-deoxy-D-ribose 1-phosphate degradation; D-glyceraldehyde 3-phosphate and acetaldehyde from 2-deoxy-alpha-D-ribose 1-phosphate: step 1/2. Isomerase that catalyzes the conversion of deoxy-ribose 1-phosphate (dRib-1-P) and ribose 1-phosphate (Rib-1-P) to deoxy-ribose 5-phosphate (dRib-5-P) and ribose 5-phosphate (Rib-5-P), respectively. The chain is Phosphopentomutase from Erwinia tasmaniensis (strain DSM 17950 / CFBP 7177 / CIP 109463 / NCPPB 4357 / Et1/99).